An 86-amino-acid chain; its full sequence is MQKQTLLNIGFGNFVVSSRVITIVNPSSSPMRRLREDARQEGRLVDATQGRKTRSIIVTDSNHVILSAIQAETIGHRYTSEEVEND.

Belongs to the RemA family.

This chain is Putative regulatory protein Desal_2819, found in Maridesulfovibrio salexigens (strain ATCC 14822 / DSM 2638 / NCIMB 8403 / VKM B-1763) (Desulfovibrio salexigens).